The following is a 345-amino-acid chain: D-fructose 1,6-bisphosphatase class 2/sedoheptulose 1,7-bisphosphatase (345 aa).

D33, E57, D97, and E100 together coordinate Mn(2+). Substrate is bound by residues 100 to 102 (EGT), Y131, 176 to 178 (RPR), and 198 to 200 (DGD). Mn(2+) is bound at residue E225.

It belongs to the FBPase class 2 family. As to quaternary structure, homotetramer. Mn(2+) serves as cofactor.

The catalysed reaction is beta-D-fructose 1,6-bisphosphate + H2O = beta-D-fructose 6-phosphate + phosphate. The enzyme catalyses D-sedoheptulose 1,7-bisphosphate + H2O = D-sedoheptulose 7-phosphate + phosphate. The protein operates within carbohydrate biosynthesis; Calvin cycle. In terms of biological role, catalyzes the hydrolysis of fructose 1,6-bisphosphate (Fru 1,6-P2) and sedoheptulose 1,7-bisphosphate (Sed 1,7-P2) to fructose 6-phosphate and sedoheptulose 7-phosphate, respectively. The chain is D-fructose 1,6-bisphosphatase class 2/sedoheptulose 1,7-bisphosphatase from Microcystis aeruginosa (strain NIES-843 / IAM M-2473).